We begin with the raw amino-acid sequence, 215 residues long: Eukaryotic translation initiation factor 4E (215 aa).

Residues 1 to 27 form a disordered region; sequence MAERDSEPRVNIIRPDDEPEVEEERVP. A Phosphoserine; by PKC modification is found at serine 207.

This sequence belongs to the eukaryotic initiation factor 4E family. As to quaternary structure, eIF4F is a multi-subunit complex, the composition of which varies with external and internal environmental conditions. It is composed of at least eIF4A, eIF4E and eIF4G. eIF4E is also known to interact with other partners. In terms of processing, phosphorylation increases the ability of the protein to bind to mRNA caps and to form the eIF4F complex.

In terms of biological role, recognizes and binds the 7-methylguanosine-containing mRNA cap during an early step in the initiation of protein synthesis and facilitates ribosome binding by inducing the unwinding of the mRNAs secondary structures. This chain is Eukaryotic translation initiation factor 4E, found in Aplysia californica (California sea hare).